Consider the following 388-residue polypeptide: Pepsin A-4 (388 aa).

A signal peptide spans 1-15; that stretch reads MKWLLLLGLVALSEC. Residues 16–62 constitute a propeptide, activation peptide; sequence IMYKVPLIRKKSLRRTLSERGLLKDFLKKHNLNPARKYFPQWEAPTL. Residues 76-385 enclose the Peptidase A1 domain; the sequence is YFGTIGIGTP…DRANNQVGLA (310 aa). Asp94 is an active-site residue. A disulfide bridge links Cys107 with Cys112. Ser130 carries the phosphoserine modification. A disulfide bond links Cys268 and Cys272. Residue Asp277 is part of the active site. The cysteines at positions 311 and 344 are disulfide-linked.

This sequence belongs to the peptidase A1 family.

It is found in the secreted. It catalyses the reaction Preferential cleavage: hydrophobic, preferably aromatic, residues in P1 and P1' positions. Cleaves 1-Phe-|-Val-2, 4-Gln-|-His-5, 13-Glu-|-Ala-14, 14-Ala-|-Leu-15, 15-Leu-|-Tyr-16, 16-Tyr-|-Leu-17, 23-Gly-|-Phe-24, 24-Phe-|-Phe-25 and 25-Phe-|-Tyr-26 bonds in the B chain of insulin.. Functionally, shows particularly broad specificity; although bonds involving phenylalanine and leucine are preferred, many others are also cleaved to some extent. The protein is Pepsin A-4 (PGA4) of Homo sapiens (Human).